The sequence spans 851 residues: Putative serine/threonine-protein kinase 019R (851 aa).

Disordered stretches follow at residues 1–24 (MATNYCDEFERNPTRNPRTGRTIK), 61–91 (PRVAAASPCPEFARDPTRNPRTGRPIKRGGP), 104–160 (GGAS…KRGG), 190–216 (GLSPFRSHMRKSPARRSPARRSPARRS), and 340–400 (SRPS…GEPR). Residues 125-141 (ARRQSPAEAAEASPCPE) are compositionally biased toward low complexity. A compositionally biased stretch (basic residues) spans 196 to 216 (SHMRKSPARRSPARRSPARRS). Residues 340-366 (SRPSGVSRTSGTSGSSGSSASSRPPNS) show a composition bias toward low complexity. Positions 456–851 (AVSDNVIGQG…GEREIESFTM (396 aa)) constitute a Protein kinase domain. ATP is bound by residues 462-470 (IGQGSWGSV) and lysine 485. The Proton acceptor role is filled by aspartate 608.

This sequence belongs to the protein kinase superfamily. Ser/Thr protein kinase family.

It carries out the reaction L-seryl-[protein] + ATP = O-phospho-L-seryl-[protein] + ADP + H(+). It catalyses the reaction L-threonyl-[protein] + ATP = O-phospho-L-threonyl-[protein] + ADP + H(+). The protein is Putative serine/threonine-protein kinase 019R of Dryophytes versicolor (chameleon treefrog).